A 672-amino-acid chain; its full sequence is Transmembrane 9 superfamily member 2 (672 aa).

The first 18 residues, 1–18, serve as a signal peptide directing secretion; that stretch reads MKRGVWLLIYCYATLTKG. Residues 19 to 307 lie on the Extracellular side of the membrane; that stretch reads FSLPGLSPTT…DKYLHIYDPQ (289 aa). Residues 308–328 traverse the membrane as a helical segment; that stretch reads IQWFSLINFSVIVILLSSVVM. The Cytoplasmic segment spans residues 329 to 383; sequence HSLLRALKSDLARYNELNLDNEFHEDSGWKLGHGDVFRTPSKSMLLSILVGSGMQ. The chain crosses the membrane as a helical span at residues 384-404; it reads LFLMVMCSIFFAAVGLVSPVS. Topologically, residues 405-410 are extracellular; it reads RGSLPT. The helical transmembrane segment at 411–431 threads the bilayer; sequence VMFVLYALFGFVGSYASMGVY. Topologically, residues 432 to 447 are cytoplasmic; that stretch reads KFFRGPYWKANMILTP. A helical membrane pass occupies residues 448–468; the sequence is ILLPGAIFLLIVIMNFFLLFA. At 469-479 the chain is on the extracellular side; the sequence is HSSGVIPARSL. A helical transmembrane segment spans residues 480-500; sequence FFIILLWFLVSVPLSFAGSIV. Over 501-532 the chain is Cytoplasmic; sequence AHKQCNWDEHPTKTNQIARQIPYQPWYLRTAQ. The helical transmembrane segment at 533-553 threads the bilayer; that stretch reads ATLIAGIFSFGSIAVELYFIY. At 554–565 the chain is on the extracellular side; the sequence is SSLWFNKIFYMF. The helical transmembrane segment at 566 to 586 threads the bilayer; it reads GFLLFSFLLLTLTTSLVTILI. Residues 587–601 lie on the Cytoplasmic side of the membrane; sequence TYYSLCLENWLWQWR. Residues 602–622 form a helical membrane-spanning segment; the sequence is SFIIGGLGCSIYTFIHSILFT. At 623–628 the chain is on the extracellular side; sequence KFKLGG. The helical transmembrane segment at 629-649 threads the bilayer; the sequence is VITVVLYLGYSLIISALCCVV. Topologically, residues 650–672 are cytoplasmic; that stretch reads TGAIGFFSSMFFIRKIYSAIKVE.

This sequence belongs to the nonaspanin (TM9SF) (TC 9.A.2) family.

It is found in the vacuole membrane. Its function is as follows. With EMP70 and TMN3, plays a critical role in the late stages of a nutrient-controlled pathway notably regulating FLO11 gene expression. Acts downstream of RAS2 and TOR. Essential for cell adhesion and filamentous growth. May play a role as effector of cellular copper homeostasis. The polypeptide is Transmembrane 9 superfamily member 2 (TMN2) (Saccharomyces cerevisiae (strain ATCC 204508 / S288c) (Baker's yeast)).